Consider the following 173-residue polypeptide: Co-chaperone protein HscB homolog (173 aa).

One can recognise a J domain in the interval 5 to 77; sequence CHFALFDLQP…SQRARYLLAL (73 aa).

The protein belongs to the HscB family. In terms of assembly, interacts with HscA and stimulates its ATPase activity.

Co-chaperone involved in the maturation of iron-sulfur cluster-containing proteins. Seems to help targeting proteins to be folded toward HscA. This chain is Co-chaperone protein HscB homolog, found in Ectopseudomonas mendocina (strain ymp) (Pseudomonas mendocina).